Consider the following 503-residue polypeptide: D-alanine--D-alanyl carrier protein ligase (503 aa).

An ATP-binding site is contributed by 151–152 (TS). Residue Asp-196 participates in D-alanine binding. 291–296 (NTYGPT) lines the ATP pocket. Val-300 is a binding site for D-alanine. Asp-382 and Lys-491 together coordinate ATP. Lys-491 is a D-alanine binding site.

The protein belongs to the ATP-dependent AMP-binding enzyme family. DltA subfamily.

The protein localises to the cytoplasm. It carries out the reaction holo-[D-alanyl-carrier protein] + D-alanine + ATP = D-alanyl-[D-alanyl-carrier protein] + AMP + diphosphate. The protein operates within cell wall biogenesis; lipoteichoic acid biosynthesis. Catalyzes the first step in the D-alanylation of lipoteichoic acid (LTA), the activation of D-alanine and its transfer onto the D-alanyl carrier protein (Dcp) DltC. In an ATP-dependent two-step reaction, forms a high energy D-alanyl-AMP intermediate, followed by transfer of the D-alanyl residue as a thiol ester to the phosphopantheinyl prosthetic group of the Dcp. D-alanylation of LTA plays an important role in modulating the properties of the cell wall in Gram-positive bacteria, influencing the net charge of the cell wall. The polypeptide is D-alanine--D-alanyl carrier protein ligase (Bacillus velezensis (strain DSM 23117 / BGSC 10A6 / LMG 26770 / FZB42) (Bacillus amyloliquefaciens subsp. plantarum)).